Here is a 640-residue protein sequence, read N- to C-terminus: Protein ALTERED PHOSPHATE STARVATION RESPONSE 1 (640 aa).

Positions 60–175 (TPLHLHHNPP…ATPQASSVVS (116 aa)) are disordered. Positions 68 to 87 (PPSPSPPPPPPPRPPPPPLS) are enriched in pro residues. Positions 88 to 103 (PGSETTTWTTTTTSSV) are enriched in low complexity. The span at 104 to 118 (LPPPPPPPPPPPPPS) shows a compositional bias: pro residues. Residues 144 to 173 (TTATRTATGTGSDAAVTTAPTTATPQASSV) show a composition bias toward low complexity. Residues 336 to 371 (KTEKAKKDVEKLESQLSVSSQAIQSASNEIIKLRET) are a coiled coil.

Expressed in the root tip of primary and lateral roots, specifically in the meristematic region, including the quiescent center and lateral root cap cells.

It localises to the nucleus. Functionally, required for the coordination of cell differentiation and cell elongation in the root tip. Required for the coordination of cell processes necessary for correct root growth in response to phosphate starvation, through the modulation of the auxin transporter protein PIN7. The sequence is that of Protein ALTERED PHOSPHATE STARVATION RESPONSE 1 from Arabidopsis thaliana (Mouse-ear cress).